The primary structure comprises 252 residues: Ribonuclease HII (252 aa).

An RNase H type-2 domain is found at 68–252 (EYVAGLDEVG…FGPVRDRLRS (185 aa)). A divalent metal cation contacts are provided by D74, E75, and D165.

This sequence belongs to the RNase HII family. Mn(2+) is required as a cofactor. It depends on Mg(2+) as a cofactor.

The protein localises to the cytoplasm. It catalyses the reaction Endonucleolytic cleavage to 5'-phosphomonoester.. Its function is as follows. Endonuclease that specifically degrades the RNA of RNA-DNA hybrids. This chain is Ribonuclease HII, found in Lacticaseibacillus paracasei (strain ATCC 334 / BCRC 17002 / CCUG 31169 / CIP 107868 / KCTC 3260 / NRRL B-441) (Lactobacillus paracasei).